A 187-amino-acid chain; its full sequence is Elongation factor P (187 aa).

It belongs to the elongation factor P family.

It localises to the cytoplasm. Its pathway is protein biosynthesis; polypeptide chain elongation. In terms of biological role, involved in peptide bond synthesis. Stimulates efficient translation and peptide-bond synthesis on native or reconstituted 70S ribosomes in vitro. Probably functions indirectly by altering the affinity of the ribosome for aminoacyl-tRNA, thus increasing their reactivity as acceptors for peptidyl transferase. The sequence is that of Elongation factor P from Corynebacterium jeikeium (strain K411).